A 326-amino-acid chain; its full sequence is Vitamin B12 import system permease protein BtuC (326 aa).

9 helical membrane passes run 15–35 (WLLC…CAGE), 61–81 (LAVL…QALF), 88–108 (PGLL…VLLG), 112–132 (LPNW…TLIL), 146–166 (LLAG…AIYF), 184–204 (GGVD…LLWI), 240–260 (GWMV…GLVI), 274–294 (VLLP…DIVA), and 302–322 (ELPI…WLLL).

This sequence belongs to the binding-protein-dependent transport system permease family. FecCD subfamily. The complex is composed of two ATP-binding proteins (BtuD), two transmembrane proteins (BtuC) and a solute-binding protein (BtuF).

It is found in the cell inner membrane. In terms of biological role, part of the ABC transporter complex BtuCDF involved in vitamin B12 import. Involved in the translocation of the substrate across the membrane. In Shigella boydii serotype 18 (strain CDC 3083-94 / BS512), this protein is Vitamin B12 import system permease protein BtuC.